We begin with the raw amino-acid sequence, 393 residues long: Putative 8-amino-7-oxononanoate synthase (393 aa).

A substrate-binding site is contributed by arginine 23. Glycine 110 to tyrosine 111 provides a ligand contact to pyridoxal 5'-phosphate. Residue histidine 135 participates in substrate binding. Pyridoxal 5'-phosphate contacts are provided by residues serine 183, aspartate 208–histidine 211, and threonine 239–lysine 242. Lysine 242 bears the N6-(pyridoxal phosphate)lysine mark. Threonine 362 lines the substrate pocket.

Belongs to the class-II pyridoxal-phosphate-dependent aminotransferase family. BioF subfamily. Homodimer. The cofactor is pyridoxal 5'-phosphate.

It carries out the reaction 6-carboxyhexanoyl-[ACP] + L-alanine + H(+) = (8S)-8-amino-7-oxononanoate + holo-[ACP] + CO2. The protein operates within cofactor biosynthesis; biotin biosynthesis. In terms of biological role, catalyzes the decarboxylative condensation of pimeloyl-[acyl-carrier protein] and L-alanine to produce 8-amino-7-oxononanoate (AON), [acyl-carrier protein], and carbon dioxide. The sequence is that of Putative 8-amino-7-oxononanoate synthase (bioF) from Trichodesmium erythraeum (strain IMS101).